The sequence spans 613 residues: Myrcene synthase, chloroplastic (613 aa).

The transit peptide at Met-1 to Gln-46 directs the protein to the chloroplast. Positions 324, 361, and 365 each coordinate (2E)-geranyl diphosphate. Residues Asp-361 and Asp-365 each contribute to the Mg(2+) site. The DDXXD motif signature appears at Asp-361–Asp-365. A helical membrane pass occupies residues Ile-455–Phe-475. Residues Arg-503 and Asp-506 each coordinate (2E)-geranyl diphosphate. The Mg(2+) site is built by Asp-506, Thr-510, and Glu-514.

The protein belongs to the terpene synthase family. Tpsb subfamily. The cofactor is Mg(2+). It depends on Mn(2+) as a cofactor. As to expression, expressed in trichomes.

The protein localises to the plastid. Its subcellular location is the chloroplast membrane. The catalysed reaction is (2E)-geranyl diphosphate = beta-myrcene + diphosphate. The protein operates within secondary metabolite biosynthesis; terpenoid biosynthesis. In terms of biological role, monoterpene synthase that catalyzes the formation of myrcene. Can use geranyl diphosphate as substrate, but not farnesyl diphosphate or geranylgeranyl diphosphate. The sequence is that of Myrcene synthase, chloroplastic from Humulus lupulus (European hop).